The primary structure comprises 351 residues: D-alanine--D-alanine ligase (351 aa).

Residues 135-343 form the ATP-grasp domain; sequence NQIFLQSGQK…MEEVFSDLIE (209 aa). ATP is bound at residue 167-222; the sequence is LETLGFPQFLKPVEGGSSVSVYKITNREQLKEKLALIFESDSKVMSQSFLTGIEVS. D298, E310, and N312 together coordinate Mg(2+).

It belongs to the D-alanine--D-alanine ligase family. The cofactor is Mg(2+). Requires Mn(2+) as cofactor.

It is found in the cytoplasm. The enzyme catalyses 2 D-alanine + ATP = D-alanyl-D-alanine + ADP + phosphate + H(+). Its pathway is cell wall biogenesis; peptidoglycan biosynthesis. Functionally, cell wall formation. The protein is D-alanine--D-alanine ligase of Leptospira interrogans serogroup Icterohaemorrhagiae serovar Lai (strain 56601).